Here is a 501-residue protein sequence, read N- to C-terminus: UPF0288 protein Maeo_0995 (501 aa).

It belongs to the UPF0288 family.

The chain is UPF0288 protein Maeo_0995 from Methanococcus aeolicus (strain ATCC BAA-1280 / DSM 17508 / OCM 812 / Nankai-3).